The primary structure comprises 397 residues: MGASKIVLAYSGGLDTTVAVKWLSEKFGAEVYTVTVDVGQEDDFSKIEERAYKAGAVQHFYIDAKREFAEEYIARAILMNGMYEGVYPLGTALARPLIAAKVVEVARRLGADAVAHGSTSKGNDQVRFDVTVKALAPDLKIIAPARIWGMTRAEEIEYAKRHGLPVGEEHKKYSIDDNLWSRSIEGGPIDDPLAEPPEDAFKWTVSPDKAPHDPTYLTIEFEKGLPVAVNGEKMSLASIISLLNHVGGANGVGRIDHIENRLVGFKSREVYEAPAAVILYHAHRDLEKMVLTPRELRFKHYVLDPQWADLVYQGLWVEPLRNALEKAAEEMERWVSGEVRVKLYKGSLWVVGRESPYGGYSKELADYSAGWYPSDEEARGFIEMWSLHSLTALRRRK.

Residue 9–17 (AYSGGLDTT) coordinates ATP. L-citrulline is bound at residue tyrosine 87. Glycine 117 provides a ligand contact to ATP. Residues threonine 119, asparagine 123, and aspartate 124 each contribute to the L-aspartate site. Asparagine 123 serves as a coordination point for L-citrulline. L-citrulline contacts are provided by arginine 127, serine 174, serine 183, glutamate 259, and tyrosine 271.

Belongs to the argininosuccinate synthase family. Type 1 subfamily. Homotetramer.

Its subcellular location is the cytoplasm. The enzyme catalyses L-citrulline + L-aspartate + ATP = 2-(N(omega)-L-arginino)succinate + AMP + diphosphate + H(+). It participates in amino-acid biosynthesis; L-arginine biosynthesis; L-arginine from L-ornithine and carbamoyl phosphate: step 2/3. The protein is Argininosuccinate synthase of Pyrobaculum aerophilum (strain ATCC 51768 / DSM 7523 / JCM 9630 / CIP 104966 / NBRC 100827 / IM2).